We begin with the raw amino-acid sequence, 579 residues long: UPF0329 protein ECU06_1620 (579 aa).

2 disordered regions span residues E325–A360 and A370–K389. Over residues K329–S338 the composition is skewed to basic residues. Over residues K345–A360 the composition is skewed to acidic residues.

It belongs to the UPF0329 family.

This Encephalitozoon cuniculi (strain GB-M1) (Microsporidian parasite) protein is UPF0329 protein ECU06_1620.